Here is a 543-residue protein sequence, read N- to C-terminus: Oligopeptide-binding protein AppA (543 aa).

A signal peptide spans 1 to 23; sequence MKRRKTALMMLSVLMVLAIFLSA. The N-palmitoyl cysteine moiety is linked to residue cysteine 24. A lipid anchor (S-diacylglycerol cysteine) is attached at cysteine 24.

The protein belongs to the bacterial solute-binding protein 5 family.

The protein resides in the cell membrane. In terms of biological role, this protein is a component of an oligopeptide permease, a binding protein-dependent transport system. This APP system can completely substitute for the OPP system in both sporulation and genetic competence. AppA can bind and transport tetra- and pentapeptides but not tripeptides. In Bacillus subtilis (strain 168), this protein is Oligopeptide-binding protein AppA (appA).